Consider the following 595-residue polypeptide: SVP1-like protein 2 (595 aa).

Positions 1 to 28 are disordered; it reads MVLAHSINTNPNTNTNTNNTSTTSSTTT. The WD 1 repeat unit spans residues 30–68; the sequence is PNDSKILCINFNQDQGCFAISHEQGFLVYNTDPIELRVK. Low complexity-rich tracts occupy residues 76 to 112 and 270 to 339; these read HTTS…GSNN and LSPT…TTTT. 2 disordered regions span residues 76 to 132 and 264 to 342; these read HTTS…GSGS and FSKR…TSAK. 2 WD repeats span residues 389 to 429 and 434 to 473; these read AHKS…LLYE and IDRA…YPND. The segment at 467 to 490 is disordered; sequence ETQYPNDGGSGGTKDGGGGGRGSK. Residues 474–488 show a composition bias toward gly residues; it reads GGSGGTKDGGGGGRG.

This sequence belongs to the WD repeat PROPPIN family.

It is found in the vacuole membrane. The protein resides in the cytoplasmic vesicle membrane. Involved in mitochondrial or peroxisomal functions and amino acid signaling pathways. In Candida albicans (strain SC5314 / ATCC MYA-2876) (Yeast), this protein is SVP1-like protein 2 (HSV2).